A 131-amino-acid chain; its full sequence is Large ribosomal subunit protein bL12 (131 aa).

The protein belongs to the bacterial ribosomal protein bL12 family. In terms of assembly, homodimer. Part of the ribosomal stalk of the 50S ribosomal subunit. Forms a multimeric L10(L12)X complex, where L10 forms an elongated spine to which 2 to 4 L12 dimers bind in a sequential fashion. Binds GTP-bound translation factors.

Forms part of the ribosomal stalk which helps the ribosome interact with GTP-bound translation factors. Is thus essential for accurate translation. In Tropheryma whipplei (strain Twist) (Whipple's bacillus), this protein is Large ribosomal subunit protein bL12.